The following is a 389-amino-acid chain: Type II methyltransferase M1.ScrFI (389 aa).

The HTH cro/C1-type domain occupies Ile-16 to Phe-71. Residues Tyr-79–Ser-387 enclose the SAM-dependent MTase C5-type domain. Residue Cys-149 is part of the active site.

Belongs to the class I-like SAM-binding methyltransferase superfamily. C5-methyltransferase family.

The catalysed reaction is a 2'-deoxycytidine in DNA + S-adenosyl-L-methionine = a 5-methyl-2'-deoxycytidine in DNA + S-adenosyl-L-homocysteine + H(+). Functionally, a methylase, recognizes the double-stranded sequence 5'-CCNGG-3', methylates C-2 on both strands, and protects the DNA from cleavage by the ScrFI endonuclease. This chain is Type II methyltransferase M1.ScrFI (scrFIAM), found in Lactococcus lactis subsp. cremoris (Streptococcus cremoris).